The primary structure comprises 455 residues: O-acyltransferase pigD (455 aa).

This sequence belongs to the trichothecene 3-O-acetyltransferase family.

Its pathway is secondary metabolite biosynthesis. In terms of biological role, O-acetyltransferase; part of the gene cluster that mediates the biosynthesis of azaphilone pigments (MonAzPs), a complex mixture of compounds with a common azaphilone skeleton very widely used as food colorants. Within the pathway, pigD directly transfers the fatty acyl chain from the beta-ketoacyl-ACP produced by the pigJ-pigK fatty acid synthase (FAS) to the C-4 alcohol. The first step of the pathway is performed by the nrPKS pigA that forms the hexaketide precursor from successive condensations of five malonyl-CoA units, with a simple acetyl-CoA starter unit. The role of esterase pigG is not clear, but it may play at most a supplementary role in the formation of the benzaldehyde produced by the pigA nrPKS. This very reactive benzaldehyde is intercepted by the pigC ketoreductase that to provide the first stable enzyme-free MonAzPs intermediate, 6-(4-hydroxy-2-oxopentyl)-3-methyl-2,4-dioxocyclohexane carbaldehyde, also known as M7PKS-1. The FAD-dependent monooxygenase pigN hydroxylates M7PKS-1 at C-4, which triggers the formation of the pyran ring. PigJ, pigK and pigD are involved in the acetylation of the pyran ring. PigJ and pigK form the two subunits of a dedicated fungal FAS that produces the side chain fatty acyl moiety of MonAzPs and pigD transfers the fatty acyl chain to the C-4 alcohol. PigM and pigO are involved in the elimination of the omega-1 alcohol. PigM acts as an O-acetyltransferase that synthesizes the putative O-11 acetyl intermediate whereas pigO eliminates acetic acid to yield an intermediate with a C10(11) double bond. The dehydration of the C-11 alcohol followed by the reduction of the C6(7) double bond by the NAD(P)H-dependent oxidoreductase pigE increases the electrophilicity of the C-5 ketone of the resulting acyl benzopyran. This in turn sets up the C-5 ketone for an intramolecular Knoevenagel aldol condensation with the C-20 enol of the side chain. This condensation affords the characteristic linear tricyclic carbon skeletons of the yellow pigments that serve as the common precursors for the classical yellow pigments monascin and ankaflavin, orange pigments rubopunctatin and monascorubrin, and red pigments ribropunctamine and monascorubramine. The FAD-dependent oxidoreductase pigF is especially invoved in the biosynthesis of orange and red pigments via desaturation of C6(7). The protein is O-acyltransferase pigD of Monascus ruber (Mold).